The following is a 145-amino-acid chain: UPF0299 membrane protein plu1549 (145 aa).

Transmembrane regions (helical) follow at residues 6–26 (VLIV…CLLT), 34–54 (LPII…LLAF), 65–85 (GCSL…VGVM), and 95–115 (IIPI…IVAY).

It belongs to the UPF0299 family.

The protein localises to the cell inner membrane. The sequence is that of UPF0299 membrane protein plu1549 from Photorhabdus laumondii subsp. laumondii (strain DSM 15139 / CIP 105565 / TT01) (Photorhabdus luminescens subsp. laumondii).